Here is a 236-residue protein sequence, read N- to C-terminus: Cyclin-P3-1 (236 aa).

The protein belongs to the cyclin family. Cyclin U/P subfamily.

This chain is Cyclin-P3-1 (CYCP3-1), found in Oryza sativa subsp. japonica (Rice).